Consider the following 329-residue polypeptide: Biotin synthase (329 aa).

The Radical SAM core domain maps to 38 to 262 (NTIQVSTLLS…IMPHSYIRLS (225 aa)). Cys-53, Cys-57, and Cys-60 together coordinate [4Fe-4S] cluster. [2Fe-2S] cluster-binding residues include Cys-97, Cys-128, Cys-188, and Arg-260.

The protein belongs to the radical SAM superfamily. Biotin synthase family. Homodimer. [4Fe-4S] cluster serves as cofactor. The cofactor is [2Fe-2S] cluster.

It catalyses the reaction (4R,5S)-dethiobiotin + (sulfur carrier)-SH + 2 reduced [2Fe-2S]-[ferredoxin] + 2 S-adenosyl-L-methionine = (sulfur carrier)-H + biotin + 2 5'-deoxyadenosine + 2 L-methionine + 2 oxidized [2Fe-2S]-[ferredoxin]. Its pathway is cofactor biosynthesis; biotin biosynthesis; biotin from 7,8-diaminononanoate: step 2/2. Its function is as follows. Catalyzes the conversion of dethiobiotin (DTB) to biotin by the insertion of a sulfur atom into dethiobiotin via a radical-based mechanism. The chain is Biotin synthase from Acinetobacter baumannii (strain ACICU).